Here is a 289-residue protein sequence, read N- to C-terminus: Phosphatidylserine decarboxylase proenzyme (289 aa).

Active-site charge relay system; for autoendoproteolytic cleavage activity residues include D89, H146, and S252. Catalysis depends on S252, which acts as the Schiff-base intermediate with substrate; via pyruvic acid; for decarboxylase activity. S252 is subject to Pyruvic acid (Ser); by autocatalysis.

This sequence belongs to the phosphatidylserine decarboxylase family. PSD-B subfamily. Prokaryotic type I sub-subfamily. In terms of assembly, heterodimer of a large membrane-associated beta subunit and a small pyruvoyl-containing alpha subunit. Pyruvate serves as cofactor. Post-translationally, is synthesized initially as an inactive proenzyme. Formation of the active enzyme involves a self-maturation process in which the active site pyruvoyl group is generated from an internal serine residue via an autocatalytic post-translational modification. Two non-identical subunits are generated from the proenzyme in this reaction, and the pyruvate is formed at the N-terminus of the alpha chain, which is derived from the carboxyl end of the proenzyme. The autoendoproteolytic cleavage occurs by a canonical serine protease mechanism, in which the side chain hydroxyl group of the serine supplies its oxygen atom to form the C-terminus of the beta chain, while the remainder of the serine residue undergoes an oxidative deamination to produce ammonia and the pyruvoyl prosthetic group on the alpha chain. During this reaction, the Ser that is part of the protease active site of the proenzyme becomes the pyruvoyl prosthetic group, which constitutes an essential element of the active site of the mature decarboxylase.

The protein resides in the cell membrane. The catalysed reaction is a 1,2-diacyl-sn-glycero-3-phospho-L-serine + H(+) = a 1,2-diacyl-sn-glycero-3-phosphoethanolamine + CO2. It participates in phospholipid metabolism; phosphatidylethanolamine biosynthesis; phosphatidylethanolamine from CDP-diacylglycerol: step 2/2. Catalyzes the formation of phosphatidylethanolamine (PtdEtn) from phosphatidylserine (PtdSer). The sequence is that of Phosphatidylserine decarboxylase proenzyme from Shewanella denitrificans (strain OS217 / ATCC BAA-1090 / DSM 15013).